Here is a 492-residue protein sequence, read N- to C-terminus: Mitochondrial distribution and morphology protein 12 (492 aa).

The 492-residue stretch at 1–492 (MSIDLNWETV…VYPSFWTFLV (492 aa)) folds into the SMP-LTD domain. 3 disordered regions span residues 68–158 (DFYE…STPG), 199–301 (LEGH…GHPR), and 379–434 (AVGG…GSGN). Positions 78–90 (VASDDSEGEEDAV) are enriched in acidic residues. Positions 130 to 139 (SPGGPGGPGM) are enriched in gly residues. Over residues 246–257 (LNPNSLAPPSSS) the composition is skewed to low complexity. Polar residues predominate over residues 270–285 (TTPAPGSATALSGSNE). Low complexity predominate over residues 387–400 (GLSSPGEGPSQAQG). The span at 401–415 (QGQGQGQGQGQGQTP) shows a compositional bias: gly residues. The segment covering 416-428 (GAGQQKQQKKQAG) has biased composition (low complexity).

This sequence belongs to the MDM12 family. In terms of assembly, component of the ER-mitochondria encounter structure (ERMES) or MDM complex, composed of MMM1, MDM10, MDM12 and MDM34. An MMM1 homodimer associates with one molecule of MDM12 on each side in a pairwise head-to-tail manner, and the SMP-LTD domains of MMM1 and MDM12 generate a continuous hydrophobic tunnel for phospholipid trafficking.

Its subcellular location is the mitochondrion outer membrane. The protein localises to the endoplasmic reticulum membrane. In terms of biological role, component of the ERMES/MDM complex, which serves as a molecular tether to connect the endoplasmic reticulum (ER) and mitochondria. Components of this complex are involved in the control of mitochondrial shape and protein biogenesis, and function in nonvesicular lipid trafficking between the ER and mitochondria. MDM12 is required for the interaction of the ER-resident membrane protein MMM1 and the outer mitochondrial membrane-resident beta-barrel protein MDM10. The MDM12-MMM1 subcomplex functions in the major beta-barrel assembly pathway that is responsible for biogenesis of all mitochondrial outer membrane beta-barrel proteins, and acts in a late step after the SAM complex. The MDM10-MDM12-MMM1 subcomplex further acts in the TOM40-specific pathway after the action of the MDM12-MMM1 complex. Essential for establishing and maintaining the structure of mitochondria and maintenance of mtDNA nucleoids. The polypeptide is Mitochondrial distribution and morphology protein 12 (Chaetomium globosum (strain ATCC 6205 / CBS 148.51 / DSM 1962 / NBRC 6347 / NRRL 1970) (Soil fungus)).